Reading from the N-terminus, the 53-residue chain is Large ribosomal subunit protein eL40 (53 aa).

It belongs to the eukaryotic ribosomal protein eL40 family.

The sequence is that of Large ribosomal subunit protein eL40 from Pyrobaculum arsenaticum (strain DSM 13514 / JCM 11321 / PZ6).